A 1370-amino-acid polypeptide reads, in one-letter code: DNA-directed RNA polymerase subunit beta (1370 aa).

It belongs to the RNA polymerase beta chain family. In terms of assembly, the RNAP catalytic core consists of 2 alpha, 1 beta, 1 beta' and 1 omega subunit. When a sigma factor is associated with the core the holoenzyme is formed, which can initiate transcription.

It carries out the reaction RNA(n) + a ribonucleoside 5'-triphosphate = RNA(n+1) + diphosphate. Functionally, DNA-dependent RNA polymerase catalyzes the transcription of DNA into RNA using the four ribonucleoside triphosphates as substrates. The sequence is that of DNA-directed RNA polymerase subunit beta from Polaromonas naphthalenivorans (strain CJ2).